The chain runs to 256 residues: MALAKRIIPCLDVDNGRVVKGVKFENIRDAGDPVEIARRYDEQGADEITFLDITASVDGRDTTLHTVERMASQVFIPLTVGGGVRTVQDIRNLLNAGADKVSINTAAVFNPEFVGEAAARFGSQCIVVAIDAKKVSGPGETPRWEIFTHGGRKPTGLDAVLWAKKMEDLGAGEILLTSMDQDGMKNGFDLGVTRAISDALGIPVIASGGVGNLEHLAAGVIEGHASAVLAASIFHFGEYTVPEAKAYMASRGIVVR.

Catalysis depends on residues Asp-12 and Asp-131.

Belongs to the HisA/HisF family. Heterodimer of HisH and HisF.

It localises to the cytoplasm. It carries out the reaction 5-[(5-phospho-1-deoxy-D-ribulos-1-ylimino)methylamino]-1-(5-phospho-beta-D-ribosyl)imidazole-4-carboxamide + L-glutamine = D-erythro-1-(imidazol-4-yl)glycerol 3-phosphate + 5-amino-1-(5-phospho-beta-D-ribosyl)imidazole-4-carboxamide + L-glutamate + H(+). It participates in amino-acid biosynthesis; L-histidine biosynthesis; L-histidine from 5-phospho-alpha-D-ribose 1-diphosphate: step 5/9. In terms of biological role, IGPS catalyzes the conversion of PRFAR and glutamine to IGP, AICAR and glutamate. The HisF subunit catalyzes the cyclization activity that produces IGP and AICAR from PRFAR using the ammonia provided by the HisH subunit. This chain is Imidazole glycerol phosphate synthase subunit HisF, found in Pseudomonas syringae pv. syringae (strain B728a).